Here is a 945-residue protein sequence, read N- to C-terminus: Sensor kinase CckA (945 aa).

The next 2 helical transmembrane spans lie at 111–131 (ALRLLIVGILLMGAAFIYFLF) and 139–159 (FALVLMGVLSMVGVFYLFGAA). 3 consecutive PAS domains span residues 171–212 (HQDL…TDAD), 313–341 (LDHAPAGFFSANPAGRIIYLNATLAEWLG), and 432–505 (AEVR…FAGQ). Residues 574 to 797 (GIAHDFNNVL…TFKIFLPRLI (224 aa)) enclose the Histidine kinase domain. At H577 the chain carries Phosphohistidine; by autocatalysis. In terms of domain architecture, Response regulatory spans 825-941 (TVLLVEDEDA…QLATTVKEML (117 aa)). D876 is modified (4-aspartylphosphate).

The protein resides in the cell inner membrane. The catalysed reaction is ATP + protein L-histidine = ADP + protein N-phospho-L-histidine.. In terms of biological role, component of a regulatory phosphorelay system that controls B.abortus cell growth, division, and intracellular survival inside mammalian host cells. This signaling pathway is composed of CckA, ChpT, CtrA and CpdR. CckA autophosphorylates in the presence of ATP on a conserved His residue and transfers a phosphoryl group to a conserved Asp residue on its C-terminal receiver domain. CckA-P transfers phosphoryl groups to the ChpT phosphotransferase. In Brucella abortus (strain 2308), this protein is Sensor kinase CckA.